An 827-amino-acid polypeptide reads, in one-letter code: Valine--tRNA ligase (827 aa).

Positions 41-51 match the 'HIGH' region motif; sequence PNVTGQLHLGH. The 'KMSKS' region signature appears at 511–515; the sequence is KMTKS. Residue K514 coordinates ATP. The stretch at 765–827 forms a coiled coil; the sequence is ENLSKEKAQK…KELLDEKIIE (63 aa).

Belongs to the class-I aminoacyl-tRNA synthetase family. ValS type 1 subfamily. As to quaternary structure, monomer.

The protein localises to the cytoplasm. It catalyses the reaction tRNA(Val) + L-valine + ATP = L-valyl-tRNA(Val) + AMP + diphosphate. Its function is as follows. Catalyzes the attachment of valine to tRNA(Val). As ValRS can inadvertently accommodate and process structurally similar amino acids such as threonine, to avoid such errors, it has a 'posttransfer' editing activity that hydrolyzes mischarged Thr-tRNA(Val) in a tRNA-dependent manner. The sequence is that of Valine--tRNA ligase from Mycoplasmopsis pulmonis (strain UAB CTIP) (Mycoplasma pulmonis).